The primary structure comprises 419 residues: rRNA methyltransferase 3, mitochondrial (419 aa).

Residues 1 to 39 (MAALCGGMLRGCILKPLGLSGSLQLKRNVRALRRTPVRV) constitute a mitochondrion transit peptide. Residues 42 to 68 (ADEEGRERKQVEASRQRQPRQNESQAC) form a disordered region. Positions 44–56 (EEGRERKQVEASR) are enriched in basic and acidic residues. Residues glycine 357, isoleucine 381, and leucine 390 each coordinate S-adenosyl-L-methionine.

The protein belongs to the class IV-like SAM-binding methyltransferase superfamily. RNA methyltransferase TrmH family.

It is found in the mitochondrion. The enzyme catalyses a uridine in rRNA + S-adenosyl-L-methionine = a 2'-O-methyluridine in rRNA + S-adenosyl-L-homocysteine + H(+). Its function is as follows. S-adenosyl-L-methionine-dependent 2'-O-ribose methyltransferase that catalyzes the formation of 2'-O-methylguanosine at position 1370 (Gm1370) in the mitochondrial large subunit ribosomal RNA (mtLSU rRNA), a conserved modification in the peptidyl transferase domain of the mtLSU rRNA. Also required for formation of 2'-O-methyluridine at position 1369 (Um1369) mediated by MRM2. The polypeptide is rRNA methyltransferase 3, mitochondrial (Xenopus laevis (African clawed frog)).